The chain runs to 624 residues: Kelch-like ECH-associated protein 1 (624 aa).

C38 is subject to S-(2-succinyl)cysteine. Residues 77 to 149 (CDVTLQVKYQ…AYTASISMGE (73 aa)) enclose the BTB domain. R135 is covalently cross-linked (N5-[4-(S-L-cysteinyl)-5-methyl-1H-imidazol-2-yl]-L-ornithine (Arg-Cys) (interchain with C-151 in KEAP1)). An S-(2-succinyl)cysteine mark is found at C151 and C241. C151 bears the S-(2,3-dicarboxypropyl)cysteine; alternate mark. C151 bears the S-nitrosocysteine; alternate mark. An N5-[4-(S-L-cysteinyl)-5-methyl-1H-imidazol-2-yl]-L-ornithine (Cys-Arg) (interchain with R-135 in KEAP1) cross-link involves residue C151. The BACK domain occupies 184–286 (AIGIANFAEQ…TPNFLQMQLQ (103 aa)). 2 positions are modified to S-(2,3-dicarboxypropyl)cysteine: C257 and C273. S-(2-succinyl)cysteine occurs at positions 288 and 319. At C288 the chain carries S-(2,3-dicarboxypropyl)cysteine; alternate. 6 Kelch repeats span residues 327-372 (LIYT…VVGG), 373-423 (LLYA…VIDG), 424-470 (HIYA…VLNR), 471-517 (LLYA…VLHN), 518-564 (CIYA…VHQG), and 565-611 (RIYV…VTME). C434 is subject to S-cGMP-cysteine. C613 carries the S-(2-succinyl)cysteine modification.

It belongs to the KEAP1 family. As to quaternary structure, component of the BCR(KEAP1) E3 ubiquitin ligase complex, at least composed of 2 molecules of CUL3, 2 molecules of KEAP1, and RBX1. Interacts with NFE2L2/NRF2; the interaction is direct. Forms a ternary complex with NFE2L2/NRF2 and PGAM5. Interacts with (phosphorylated) SQSTM1/p62; the interaction is direct and inactivates the BCR(KEAP1) complex by sequestering it in inclusion bodies, promoting its degradation. Interacts with NFE2L1. Interacts with BPTF and PTMA. Interacts with MAP1LC3B. Interacts indirectly with ENC1. Interacts with SESN1 and SESN2. Interacts with HSP90AA1 and HSP90AB1. Interacts with PGCKA1; this interaction prevents the ubiquitination of KEAP1 by TRIM25, thus protecting KEAP1 from degradation. Non-enzymatic covalent modifications of reactive cysteines by electrophile metabolites inactivate the BCR(KEAP1) complex. Accumulation of fumarate promotes the formation of cysteine S-succination (S-(2-succinyl)cysteine), leading to inactivate the BCR(KEAP1) complex and promote NFE2L2/NRF2 nuclear accumulation and activation. Nitric oxide-dependent 8-Nitro-cGMP formation promotes cysteine guanylation (S-cGMP-cysteine), leading to NFE2L2/NRF2 nuclear accumulation and activation. Itaconate, an anti-inflammatory metabolite generated in response to lipopolysaccharide, alkylates cysteines, activating NFE2L2/NRF2. Methylglyoxal, a reactive metabolite that accumulates when the glycolytic enzyme PGK1 is inhibited, promotes formation of a methylimidazole cross-link between proximal Cys-151 and Arg-135 on another KEAP1 molecule, resulting in an inactive dimer that inactivates the BCR(KEAP1) complex. In terms of processing, degraded via a proteasomal-independent process during selective autophagy: interaction with phosphorylated SQSTM1/p62 sequesters KEAP1 in inclusion bodies, leading to its degradation. Post-translationally, auto-ubiquitinated by the BCR(KEAP1) complex. Quinone-induced oxidative stress, but not sulforaphane, increases its ubiquitination. Ubiquitination and subsequent degradation is most pronounced following prolonged exposure of cells to oxidative stress, particularly in glutathione-deficient cells that are highly susceptible to oxidative stress. Deubiquitinated by USP25; leading to stabilization. Ubiquitinated by TRIM25; leading to degradation upon ER stress.

The protein localises to the cytoplasm. Its subcellular location is the nucleus. It participates in protein modification; protein ubiquitination. Its activity is regulated as follows. Ubiquitin ligase activity of the BCR(KEAP1) complex is inhibited by oxidative stress and electrophile metabolites such as sulforaphane. Electrophile metabolites react with reactive cysteine residues in KEAP1 and trigger non-enzymatic covalent modifications of these cysteine residues, leading to inactivate the ubiquitin ligase activity of the BCR(KEAP1) complex. Selective autophagy also inactivates the BCR(KEAP1) complex via interaction between KEAP1 and SQSTM1/p62, which sequesters the complex in inclusion bodies and promotes its degradation. In terms of biological role, substrate-specific adapter of a BCR (BTB-CUL3-RBX1) E3 ubiquitin ligase complex that regulates the response to oxidative stress by targeting NFE2L2/NRF2 for ubiquitination. KEAP1 acts as a key sensor of oxidative and electrophilic stress: in normal conditions, the BCR(KEAP1) complex mediates ubiquitination and degradation of NFE2L2/NRF2, a transcription factor regulating expression of many cytoprotective genes. In response to oxidative stress, different electrophile metabolites trigger non-enzymatic covalent modifications of highly reactive cysteine residues in KEAP1, leading to inactivate the ubiquitin ligase activity of the BCR(KEAP1) complex, promoting NFE2L2/NRF2 nuclear accumulation and expression of phase II detoxifying enzymes. In response to selective autophagy, KEAP1 is sequestered in inclusion bodies following its interaction with SQSTM1/p62, leading to inactivation of the BCR(KEAP1) complex and activation of NFE2L2/NRF2. The BCR(KEAP1) complex also mediates ubiquitination of SQSTM1/p62, increasing SQSTM1/p62 sequestering activity and degradation. The BCR(KEAP1) complex also targets BPTF and PGAM5 for ubiquitination and degradation by the proteasome. In Pongo abelii (Sumatran orangutan), this protein is Kelch-like ECH-associated protein 1.